A 467-amino-acid chain; its full sequence is Repressible acid phosphatase (467 aa).

Residues 1-17 form the signal peptide; sequence MFKSVVYSILAASLANA. His-75 functions as the Nucleophile in the catalytic mechanism. 6 N-linked (GlcNAc...) asparagine glycosylation sites follow: Asn-97, Asn-103, Asn-162, Asn-192, Asn-250, and Asn-315. The active-site Proton donor is the Asp-338. 6 N-linked (GlcNAc...) asparagine glycosylation sites follow: Asn-356, Asn-390, Asn-439, Asn-445, Asn-456, and Asn-461.

It belongs to the histidine acid phosphatase family. In terms of processing, glycosylated during secretion across the membrane.

Its subcellular location is the secreted. The catalysed reaction is a phosphate monoester + H2O = an alcohol + phosphate. Partially mediates extracellular nucleotide derived phosphate hydrolysis along with NPP1 and NPP2. The chain is Repressible acid phosphatase (PHO5) from Saccharomyces cerevisiae (strain ATCC 204508 / S288c) (Baker's yeast).